The sequence spans 785 residues: Conserved oligomeric Golgi complex subunit 4 (785 aa).

The segment at 1 to 24 (MADFDSPPKLSGVQPPSEGVGGGR) is disordered. Ala2 bears the N-acetylalanine mark. Residues 2–84 (ADFDSPPKLS…VTLHRMGPNL (83 aa)) are interaction with SCFD1. At Ser6 the chain carries Phosphoserine. Residues 85 to 153 (QLIEGDAKQL…TALRNEDYEQ (69 aa)) are interaction with STX5. A d domain region spans residues 618-740 (PQVQPWINSF…SQMATILNLE (123 aa)). Positions 741 to 785 (RVTEILDYWGPNSGPLTWRLTPAEVRQVLALRIDFRSEDIKRLRL) are e domain; essential for proper cell surface glycosylation.

Belongs to the COG4 family. As to quaternary structure, monomer. Component of the conserved oligomeric Golgi (COG) complex which is composed of eight different subunits and is required for normal Golgi morphology and localization. Mediates interaction of SCFD1 with the COG complex. Interacts with STX5.

Its subcellular location is the cytoplasm. The protein localises to the cytosol. It localises to the golgi apparatus membrane. In terms of biological role, required for normal Golgi function. Plays a role in SNARE-pin assembly and Golgi-to-ER retrograde transport via its interaction with SCFD1. The chain is Conserved oligomeric Golgi complex subunit 4 (COG4) from Pongo abelii (Sumatran orangutan).